Consider the following 333-residue polypeptide: Secreted mono- and diacylglycerol lipase 1 (333 aa).

The first 16 residues, 1-16 (MMLILSILSIIAFAAA), serve as a signal peptide directing secretion. 2 disulfides stabilise this stretch: cysteine 56–cysteine 268 and cysteine 276–cysteine 298. The Nucleophile role is filled by serine 176. Active-site residues include aspartate 230 and histidine 288.

Belongs to the AB hydrolase superfamily. Lipase family. Class 3 subfamily.

The protein resides in the secreted. The enzyme catalyses a monoacylglycerol + H2O = glycerol + a fatty acid + H(+). The catalysed reaction is a diacylglycerol + H2O = a monoacylglycerol + a fatty acid + H(+). Functionally, secreted mono- and diacylglycerol lipase that allows the use of hydrolyzed lipids as carbon source and might play a role in pathogenicity. Shows lipolytic activity towards olive oil and p-nitrophenylpalmitate. In Fusarium solani (Filamentous fungus), this protein is Secreted mono- and diacylglycerol lipase 1.